The primary structure comprises 271 residues: DNA repair protein RecO (271 aa).

The protein belongs to the RecO family.

In terms of biological role, involved in DNA repair and RecF pathway recombination. The protein is DNA repair protein RecO of Rhodococcus erythropolis (strain PR4 / NBRC 100887).